The chain runs to 396 residues: uncharacterized protein (396 aa).

Positions 8, 14, 17, and 95 each coordinate [4Fe-4S] cluster. Residues Gln-229, Tyr-258, Glu-279, and Asp-325 each contribute to the S-adenosyl-L-methionine site. Cys-352 serves as the catalytic Nucleophile.

This sequence belongs to the class I-like SAM-binding methyltransferase superfamily. RNA M5U methyltransferase family.

This is an uncharacterized protein from Chlamydia trachomatis serovar D (strain ATCC VR-885 / DSM 19411 / UW-3/Cx).